The following is a 446-amino-acid chain: Protein IQ-DOMAIN 19 (446 aa).

Residues 93–140 form a disordered region; sequence IPGTPKEKRRWSFRRSSATGPPPPACAITLKDSPPPPPPPPPPPPLQQ. Over residues 125–139 the composition is skewed to pro residues; that stretch reads SPPPPPPPPPPPPLQ. IQ domains follow at residues 163 to 191 and 192 to 214; these read EEFA…GLVK and LQAL…CMQA. Residues 214–231 form a calmodulin-binding region; it reads ALITLQAKAREQRIRMIG. Over residues 332–345 the composition is skewed to low complexity; it reads QSSKAKARSQSAPK. Residues 332 to 398 form a disordered region; sequence QSSKAKARSQ…TAKESQQHHH (67 aa). The span at 379 to 392 shows a compositional bias: polar residues; it reads QRSSSQLGSNTAKE.

The protein belongs to the IQD family. Binds to multiple calmodulin (CaM) in the presence of Ca(2+) and CaM-like proteins.

The protein localises to the cytoplasm. It is found in the cytoskeleton. It localises to the cell membrane. May be involved in cooperative interactions with calmodulins or calmodulin-like proteins. Recruits calmodulin proteins to microtubules, thus being a potential scaffold in cellular signaling and trafficking. Acts as a positive regulator of trichome branch initiation. May associate with nucleic acids and regulate gene expression at the transcriptional or post-transcriptional level. This Arabidopsis thaliana (Mouse-ear cress) protein is Protein IQ-DOMAIN 19.